We begin with the raw amino-acid sequence, 218 residues long: Ribose-5-phosphate isomerase A (218 aa).

Residues 27–30 (TGST), 80–83 (DGAD), and 93–96 (KGGG) each bind substrate. Residue glutamate 102 is the Proton acceptor of the active site. Lysine 120 provides a ligand contact to substrate.

The protein belongs to the ribose 5-phosphate isomerase family. In terms of assembly, homodimer.

The catalysed reaction is aldehydo-D-ribose 5-phosphate = D-ribulose 5-phosphate. It participates in carbohydrate degradation; pentose phosphate pathway; D-ribose 5-phosphate from D-ribulose 5-phosphate (non-oxidative stage): step 1/1. Its function is as follows. Catalyzes the reversible conversion of ribose-5-phosphate to ribulose 5-phosphate. The protein is Ribose-5-phosphate isomerase A of Picrophilus torridus (strain ATCC 700027 / DSM 9790 / JCM 10055 / NBRC 100828 / KAW 2/3).